The primary structure comprises 326 residues: Inactive peptidyl-prolyl cis-trans isomerase FKBP6 (326 aa).

Positions 53 to 142 (DASVLVKYSG…LFEIELLDFL (90 aa)) constitute a PPIase FKBP-type domain. 3 TPR repeats span residues 170–203 (AATE…LHRR), 218–251 (LLVF…DRKN), and 252–285 (AKAL…QPFN).

This sequence belongs to the FKBP6 family. As to quaternary structure, interacts with HSP72/HSPA2 and CLTC. Interacts with GAPDH; leading to inhibit GAPDH catalytic activity. Interacts (via TPR repeats) with HSP90.

Its subcellular location is the cytoplasm. The protein localises to the cytosol. It is found in the nucleus. In terms of biological role, co-chaperone required during spermatogenesis to repress transposable elements and prevent their mobilization, which is essential for the germline integrity. Acts via the piRNA metabolic process, which mediates the repression of transposable elements during meiosis by forming complexes composed of piRNAs and Piwi proteins and govern the methylation and subsequent repression of transposons. Acts as a co-chaperone via its interaction with HSP90 and is required for the piRNA amplification process, the secondary piRNA biogenesis. May be required together with HSP90 in removal of 16 nucleotide ping-pong by-products from Piwi complexes, possibly facilitating turnover of Piwi complexes. The sequence is that of Inactive peptidyl-prolyl cis-trans isomerase FKBP6 (FKBP6) from Bos taurus (Bovine).